The primary structure comprises 420 residues: Exodeoxyribonuclease 7 large subunit (420 aa).

It belongs to the XseA family. As to quaternary structure, heterooligomer composed of large and small subunits.

It is found in the cytoplasm. The catalysed reaction is Exonucleolytic cleavage in either 5'- to 3'- or 3'- to 5'-direction to yield nucleoside 5'-phosphates.. Bidirectionally degrades single-stranded DNA into large acid-insoluble oligonucleotides, which are then degraded further into small acid-soluble oligonucleotides. The sequence is that of Exodeoxyribonuclease 7 large subunit from Helicobacter pylori (strain Shi470).